The primary structure comprises 572 residues: EVEEPKTKISASTAEASSSRISSAKMTADGTIKLGDQSPLKQSEKDHPVSWDFKLVQSLRNEYADERYISRSAMLDQEMNVVNLLELIDNLQRLGLSYHFEDKIRSILSGIYNTIKMRNPEGLYATALEFRLRRQHGFYVPQEIFESFKDENGDFNHSLCEDLKGLLYLYEASYLEKENESNLEMAREFTAKHLKKILKEKRIDQELEALVQHALELPLHWRMMRLEARWFIDIYEARSDRNPILLELAKLDFNIVQAIHQNDLECTLRWWSSTGLAEKLSFARDIMVENFFWTVGTISDPQHGNARRLLTKVAALVTAIDDVYDQYGTEDELELFTSVVERWDVNSIDQLPDYMKICFLALFNFVNEMAYDALKEEGVNIIPYLRKAWADLCKAYLQEAKWFFSGHIPTLQQYLNNAWTSISAPLVVVHAYFCVDYPINKDHVEYLEKCHKIIRCSSMIIRLANDLGTSPESEVLKSADVPKSIQCYVKETGACEEKAREYLRFLIIEAWKQMNEAQTVDSPFSSTFKGFAVNVARMGQCMYQHGDGHAHQNSEPRDRILSLLFEPISSFA.

Residues 1 to 27 (EVEEPKTKISASTAEASSSRISSAKMT) constitute a chloroplast transit peptide. The segment at 1-45 (EVEEPKTKISASTAEASSSRISSAKMTADGTIKLGDQSPLKQSEK) is disordered. The span at 8–28 (KISASTAEASSSRISSAKMTA) shows a compositional bias: low complexity. 5 residues coordinate (2E)-geranyl diphosphate: Arg-284, Asp-321, Asp-325, Arg-462, and Asn-465. The Mg(2+) site is built by Asp-321 and Asp-325. The DDXXD motif signature appears at 321–325 (DDVYD). Positions 465, 469, and 473 each coordinate Mg(2+).

The protein belongs to the terpene synthase family. Tpsb subfamily. As to quaternary structure, monomer. The cofactor is Mg(2+). Mn(2+) serves as cofactor. Expressed in flowers and fruits.

The protein resides in the plastid. It localises to the chloroplast. The catalysed reaction is (2E)-geranyl diphosphate = beta-myrcene + diphosphate. It catalyses the reaction (2E)-geranyl diphosphate + H2O = linalool + diphosphate. It carries out the reaction (2E)-geranyl diphosphate = (Z)-beta-ocimene + diphosphate. The enzyme catalyses (2E)-geranyl diphosphate = (E)-beta-ocimene + diphosphate. It functions in the pathway secondary metabolite biosynthesis; terpenoid biosynthesis. Its function is as follows. Monoterpene synthase (mono-TPS) involved in the biosynthesis of monoterpenes natural products, constituent of coffee beverage aroma. Catalyzes the conversion of (2E)-geranyl diphosphate (GPP) into linalool and beta-myrcene, and, as minor products, cis-ocimene and trans-ocimene. Not able to use geranylgeranyl pyrophosphate (GGPP) and farnesyl pyrophosphate (FPP) as substrates. This is Linalool synthase TPS2, chloroplastic from Coffea arabica (Arabian coffee).